The chain runs to 540 residues: Ipecac alkaloid beta-glucosidase 9 (540 aa).

A beta-D-glucoside-binding positions include Gln36, His140, Asn185–Glu186, Tyr350, Glu421, Trp470, and Phe486. Glu186 serves as the catalytic Proton donor. The active-site Nucleophile is the Glu421.

This sequence belongs to the glycosyl hydrolase 1 family.

Its subcellular location is the cytoplasm. The protein resides in the cytosol. The enzyme catalyses deacetylipecoside + H2O = deacetylipecoside aglycone + D-glucose. It catalyses the reaction deacetylisoipecoside + H2O = deacetylisoipecoside aglycone + D-glucose. It functions in the pathway alkaloid biosynthesis. In terms of biological role, beta-glucosidase catalyzing deglucosylation on N-deacetylisoipecoside and N-deacetylipecoside. This Carapichea ipecacuanha (Ipecac) protein is Ipecac alkaloid beta-glucosidase 9.